A 167-amino-acid polypeptide reads, in one-letter code: Lipoprotein signal peptidase (167 aa).

4 consecutive transmembrane segments (helical) span residues 8–28 (TFLTSFLLVSLDWVSKLVVLL), 46–66 (WGHFSFLIVPSFNEGAAFGLF), 70–90 (KIPLLIFRVFVILCLFLFLGI), and 101–121 (IALTLILAGALGNVGDILFHG). Catalysis depends on residues Asp125 and Asp143. A helical membrane pass occupies residues 139-159 (FNLADAFISLGTLLLVGHLYF).

Belongs to the peptidase A8 family.

It localises to the cell inner membrane. It catalyses the reaction Release of signal peptides from bacterial membrane prolipoproteins. Hydrolyzes -Xaa-Yaa-Zaa-|-(S,diacylglyceryl)Cys-, in which Xaa is hydrophobic (preferably Leu), and Yaa (Ala or Ser) and Zaa (Gly or Ala) have small, neutral side chains.. The protein operates within protein modification; lipoprotein biosynthesis (signal peptide cleavage). Its function is as follows. This protein specifically catalyzes the removal of signal peptides from prolipoproteins. In Chlamydia muridarum (strain MoPn / Nigg), this protein is Lipoprotein signal peptidase.